We begin with the raw amino-acid sequence, 350 residues long: Phospho-2-dehydro-3-deoxyheptonate aldolase, Phe-sensitive (350 aa).

Lys244 bears the N6-acetyllysine mark.

It belongs to the class-I DAHP synthase family. Homotetramer.

It catalyses the reaction D-erythrose 4-phosphate + phosphoenolpyruvate + H2O = 7-phospho-2-dehydro-3-deoxy-D-arabino-heptonate + phosphate. The protein operates within metabolic intermediate biosynthesis; chorismate biosynthesis; chorismate from D-erythrose 4-phosphate and phosphoenolpyruvate: step 1/7. Its function is as follows. Stereospecific condensation of phosphoenolpyruvate (PEP) and D-erythrose-4-phosphate (E4P) giving rise to 3-deoxy-D-arabino-heptulosonate-7-phosphate (DAHP). This is Phospho-2-dehydro-3-deoxyheptonate aldolase, Phe-sensitive (aroG) from Escherichia coli O157:H7.